The chain runs to 227 residues: MPDILTASQMRALETAAFNSGAVTGLELMERAGQSVIDALFSSKAELATGEHRAVILCGPGNNGGDGFVIARLLFVLGWQVRVYLYADPEKMPRDAHANHDSWVDLVPECTQRISFPSVLPAEAERFGDEAFGNGEVDVIVDALFGIGLNRPLSGLHPILATCHANRHEAYFVAVDVPSGLGENGPLEAADWSVFPADLTVTFHRPKQAHQNGLSFCGKIMVQYIGL.

A YjeF N-terminal domain is found at M10–L227. N62 to D66 contributes to the (6S)-NADPHX binding site. The K(+) site is built by N63 and D142. Residues G146–P152 and D176 contribute to the (6S)-NADPHX site. Position 179 (S179) interacts with K(+).

Belongs to the NnrE/AIBP family. It depends on K(+) as a cofactor.

The catalysed reaction is (6R)-NADHX = (6S)-NADHX. It carries out the reaction (6R)-NADPHX = (6S)-NADPHX. Its function is as follows. Catalyzes the epimerization of the S- and R-forms of NAD(P)HX, a damaged form of NAD(P)H that is a result of enzymatic or heat-dependent hydration. This is a prerequisite for the S-specific NAD(P)H-hydrate dehydratase to allow the repair of both epimers of NAD(P)HX. In Roseobacter litoralis (strain ATCC 49566 / DSM 6996 / JCM 21268 / NBRC 15278 / OCh 149), this protein is NAD(P)H-hydrate epimerase.